The primary structure comprises 188 residues: UPF0340 protein GK3370 (188 aa).

Belongs to the UPF0340 family.

This is UPF0340 protein GK3370 from Geobacillus kaustophilus (strain HTA426).